The following is a 427-amino-acid chain: Histidinol dehydrogenase (427 aa).

Residues Y123, Q185, and N208 each coordinate NAD(+). Positions 231, 253, and 256 each coordinate substrate. Residues Q253 and H256 each contribute to the Zn(2+) site. Active-site proton acceptor residues include E321 and H322. Substrate contacts are provided by H322, D355, E409, and H414. D355 serves as a coordination point for Zn(2+). Zn(2+) is bound at residue H414.

This sequence belongs to the histidinol dehydrogenase family. Zn(2+) is required as a cofactor.

The enzyme catalyses L-histidinol + 2 NAD(+) + H2O = L-histidine + 2 NADH + 3 H(+). The protein operates within amino-acid biosynthesis; L-histidine biosynthesis; L-histidine from 5-phospho-alpha-D-ribose 1-diphosphate: step 9/9. Catalyzes the sequential NAD-dependent oxidations of L-histidinol to L-histidinaldehyde and then to L-histidine. The protein is Histidinol dehydrogenase of Oceanobacillus iheyensis (strain DSM 14371 / CIP 107618 / JCM 11309 / KCTC 3954 / HTE831).